The following is an 866-amino-acid chain: FHIP family protein v1g243165 (866 aa).

Disordered regions lie at residues 739–761 and 781–814; these read RDGPPPSLMRAHSIGSIGSASTS and GSTADISEDASPVSQAPETTGRPRASAVVRESQT. The segment covering 751–761 has biased composition (low complexity); it reads SIGSIGSASTS.

Belongs to the FHIP family.

In Nematostella vectensis (Starlet sea anemone), this protein is FHIP family protein v1g243165.